A 295-amino-acid chain; its full sequence is MRHLITTKDFNKVEIMELFKEASDFLDEKPRTFLEGKSITTIFFENSTRTLSSFESAARRLGARVLRLDVSRSSSSKGETLYDTAANLDAMSPNAIVVRHANSGVPLILAKHMHCPVVNGGDGKHAHPTQALLDLFTIYNHFQGNVEGKKICIVGDIKNSRVAASNIELLSRFNLDITLVAPPHFMPNTHLKKHYKLDENIIANSDIIMSLRTQTERHNKTVYASLKDYANDFCIQKSLAKDKKLILLHPGPVNRNIDISDEMMSDERTLVLKQVKNGVAIRMAVLKKLILENEG.

Carbamoyl phosphate contacts are provided by Arg-49 and Thr-50. Lys-77 serves as a coordination point for L-aspartate. Residues Arg-99, His-127, and Gln-130 each contribute to the carbamoyl phosphate site. Residues Arg-161 and Arg-212 each contribute to the L-aspartate site. Carbamoyl phosphate-binding residues include Gly-251 and Pro-252.

The protein belongs to the aspartate/ornithine carbamoyltransferase superfamily. ATCase family. As to quaternary structure, heterododecamer (2C3:3R2) of six catalytic PyrB chains organized as two trimers (C3), and six regulatory PyrI chains organized as three dimers (R2).

The catalysed reaction is carbamoyl phosphate + L-aspartate = N-carbamoyl-L-aspartate + phosphate + H(+). Its pathway is pyrimidine metabolism; UMP biosynthesis via de novo pathway; (S)-dihydroorotate from bicarbonate: step 2/3. Functionally, catalyzes the condensation of carbamoyl phosphate and aspartate to form carbamoyl aspartate and inorganic phosphate, the committed step in the de novo pyrimidine nucleotide biosynthesis pathway. This Campylobacter jejuni (strain RM1221) protein is Aspartate carbamoyltransferase catalytic subunit.